A 236-amino-acid chain; its full sequence is Virion protein US10 homolog (236 aa).

The segment at 1–32 (MDGAYGHVHNGSPMAVDGEESGAGTGTGAGAD) is disordered. The segment covering 21-31 (SGAGTGTGAGA) has biased composition (gly residues). The segment at 138 to 150 (CAYWCCLGHAFAC) is a zinc-finger region.

This sequence belongs to the herpesviridae US10 family. Phosphorylated.

Its subcellular location is the virion tegument. The protein resides in the host nucleus matrix. This Equine herpesvirus 1 (strain Ab4p) (EHV-1) protein is Virion protein US10 homolog.